The following is a 274-amino-acid chain: NH(3)-dependent NAD(+) synthetase (274 aa).

Position 46–53 (46–53) interacts with ATP; it reads GISGGQDS. Position 52 (aspartate 52) interacts with Mg(2+). A deamido-NAD(+)-binding site is contributed by arginine 140. Threonine 160 is a binding site for ATP. Glutamate 165 contacts Mg(2+). Deamido-NAD(+) contacts are provided by lysine 173 and aspartate 180. The ATP site is built by lysine 189 and threonine 211. 260-261 contacts deamido-NAD(+); sequence HK.

Belongs to the NAD synthetase family. In terms of assembly, homodimer.

It carries out the reaction deamido-NAD(+) + NH4(+) + ATP = AMP + diphosphate + NAD(+) + H(+). It participates in cofactor biosynthesis; NAD(+) biosynthesis; NAD(+) from deamido-NAD(+) (ammonia route): step 1/1. In terms of biological role, catalyzes the ATP-dependent amidation of deamido-NAD to form NAD. Uses ammonia as a nitrogen source. This Streptococcus pneumoniae serotype 19F (strain G54) protein is NH(3)-dependent NAD(+) synthetase.